Reading from the N-terminus, the 166-residue chain is Large ribosomal subunit protein uL10 (166 aa).

Belongs to the universal ribosomal protein uL10 family. Part of the ribosomal stalk of the 50S ribosomal subunit. The N-terminus interacts with L11 and the large rRNA to form the base of the stalk. The C-terminus forms an elongated spine to which L12 dimers bind in a sequential fashion forming a multimeric L10(L12)X complex.

Its function is as follows. Forms part of the ribosomal stalk, playing a central role in the interaction of the ribosome with GTP-bound translation factors. The chain is Large ribosomal subunit protein uL10 (rplJ) from Streptococcus pyogenes serotype M18 (strain MGAS8232).